Here is a 149-residue protein sequence, read N- to C-terminus: Glycine cleavage system H protein (149 aa).

The Lipoyl-binding domain occupies 23-104; sequence LIWVGISNHA…PYGIWLFKIN (82 aa). An N6-lipoyllysine modification is found at Lys64.

It belongs to the GcvH family. In terms of assembly, the glycine cleavage system is composed of four proteins: P, T, L and H. Requires (R)-lipoate as cofactor.

The glycine cleavage system catalyzes the degradation of glycine. The H protein shuttles the methylamine group of glycine from the P protein to the T protein. The polypeptide is Glycine cleavage system H protein (Polynucleobacter necessarius subsp. necessarius (strain STIR1)).